A 451-amino-acid chain; its full sequence is UDP-N-acetylmuramoylalanine--D-glutamate ligase (451 aa).

120–126 (GSNGKTT) provides a ligand contact to ATP.

This sequence belongs to the MurCDEF family.

It is found in the cytoplasm. It catalyses the reaction UDP-N-acetyl-alpha-D-muramoyl-L-alanine + D-glutamate + ATP = UDP-N-acetyl-alpha-D-muramoyl-L-alanyl-D-glutamate + ADP + phosphate + H(+). The protein operates within cell wall biogenesis; peptidoglycan biosynthesis. In terms of biological role, cell wall formation. Catalyzes the addition of glutamate to the nucleotide precursor UDP-N-acetylmuramoyl-L-alanine (UMA). In Bacillus pumilus (strain SAFR-032), this protein is UDP-N-acetylmuramoylalanine--D-glutamate ligase.